The following is a 309-amino-acid chain: Oxidoreductase NAD-binding domain-containing protein 1 (309 aa).

The N-terminal stretch at 1 to 14 (MVVVIPRLLRGSLG) is a signal peptide. In terms of domain architecture, FAD-binding FR-type spans 47-161 (HLERTADVVR…VGGEFFFDPK (115 aa)). An NAD(+)-binding site is contributed by 175–180 (GVGINP).

This chain is Oxidoreductase NAD-binding domain-containing protein 1 (OXNAD1), found in Bos taurus (Bovine).